The following is a 144-amino-acid chain: Large ribosomal subunit protein uL13 (144 aa).

This sequence belongs to the universal ribosomal protein uL13 family. Part of the 50S ribosomal subunit.

Functionally, this protein is one of the early assembly proteins of the 50S ribosomal subunit, although it is not seen to bind rRNA by itself. It is important during the early stages of 50S assembly. The polypeptide is Large ribosomal subunit protein uL13 (Magnetococcus marinus (strain ATCC BAA-1437 / JCM 17883 / MC-1)).